Here is a 180-residue protein sequence, read N- to C-terminus: Bifunctional protein PyrR (180 aa).

A PRPP-binding motif is present at residues 101 to 113 (VVLVDDVIFKGRT).

It belongs to the purine/pyrimidine phosphoribosyltransferase family. PyrR subfamily.

It catalyses the reaction UMP + diphosphate = 5-phospho-alpha-D-ribose 1-diphosphate + uracil. In terms of biological role, regulates the transcription of the pyrimidine nucleotide (pyr) operon in response to exogenous pyrimidines. Also displays a weak uracil phosphoribosyltransferase activity which is not physiologically significant. In Trichormus variabilis (strain ATCC 29413 / PCC 7937) (Anabaena variabilis), this protein is Bifunctional protein PyrR.